Reading from the N-terminus, the 446-residue chain is Probable glycine dehydrogenase (decarboxylating) subunit 1 (446 aa).

Belongs to the GcvP family. N-terminal subunit subfamily. The glycine cleavage system is composed of four proteins: P, T, L and H. In this organism, the P 'protein' is a heterodimer of two subunits.

It carries out the reaction N(6)-[(R)-lipoyl]-L-lysyl-[glycine-cleavage complex H protein] + glycine + H(+) = N(6)-[(R)-S(8)-aminomethyldihydrolipoyl]-L-lysyl-[glycine-cleavage complex H protein] + CO2. The glycine cleavage system catalyzes the degradation of glycine. The P protein binds the alpha-amino group of glycine through its pyridoxal phosphate cofactor; CO(2) is released and the remaining methylamine moiety is then transferred to the lipoamide cofactor of the H protein. The chain is Probable glycine dehydrogenase (decarboxylating) subunit 1 from Xanthobacter autotrophicus (strain ATCC BAA-1158 / Py2).